The following is a 209-amino-acid chain: Uracil phosphoribosyltransferase (209 aa).

5-phospho-alpha-D-ribose 1-diphosphate is bound by residues Arg79, Arg104, and 131–139 (DPMLATGGS). Uracil-binding positions include Ile194 and 199 to 201 (GDA). Residue Asp200 coordinates 5-phospho-alpha-D-ribose 1-diphosphate.

The protein belongs to the UPRTase family. Requires Mg(2+) as cofactor.

The catalysed reaction is UMP + diphosphate = 5-phospho-alpha-D-ribose 1-diphosphate + uracil. The protein operates within pyrimidine metabolism; UMP biosynthesis via salvage pathway; UMP from uracil: step 1/1. With respect to regulation, allosterically activated by GTP. Functionally, catalyzes the conversion of uracil and 5-phospho-alpha-D-ribose 1-diphosphate (PRPP) to UMP and diphosphate. The protein is Uracil phosphoribosyltransferase of Lactiplantibacillus plantarum (strain ATCC BAA-793 / NCIMB 8826 / WCFS1) (Lactobacillus plantarum).